The primary structure comprises 532 residues: Autoinducer-2 kinase (532 aa).

This sequence belongs to the FGGY kinase family.

It is found in the cytoplasm. The catalysed reaction is (S)-4,5-dihydroxypentane-2,3-dione + ATP = (2S)-2-hydroxy-3,4-dioxopentyl phosphate + ADP + H(+). Its function is as follows. Catalyzes the phosphorylation of autoinducer-2 (AI-2) to phospho-AI-2, which subsequently inactivates the transcriptional regulator LsrR and leads to the transcription of the lsr operon. Phosphorylates the ring-open form of (S)-4,5-dihydroxypentane-2,3-dione (DPD), which is the precursor to all AI-2 signaling molecules, at the C5 position. This is Autoinducer-2 kinase from Klebsiella pneumoniae subsp. pneumoniae (strain ATCC 700721 / MGH 78578).